A 282-amino-acid polypeptide reads, in one-letter code: Probable endonuclease 4 (282 aa).

Residues H66, H106, E143, D177, H180, H214, D227, H229, and E259 each coordinate Zn(2+).

Belongs to the AP endonuclease 2 family. Requires Zn(2+) as cofactor.

The enzyme catalyses Endonucleolytic cleavage to 5'-phosphooligonucleotide end-products.. Functionally, endonuclease IV plays a role in DNA repair. It cleaves phosphodiester bonds at apurinic or apyrimidinic (AP) sites, generating a 3'-hydroxyl group and a 5'-terminal sugar phosphate. The chain is Probable endonuclease 4 from Nitratidesulfovibrio vulgaris (strain ATCC 29579 / DSM 644 / CCUG 34227 / NCIMB 8303 / VKM B-1760 / Hildenborough) (Desulfovibrio vulgaris).